The chain runs to 323 residues: Tetraacyldisaccharide 4'-kinase (323 aa).

56–63 serves as a coordination point for ATP; it reads TVGGVGKT.

The protein belongs to the LpxK family.

The enzyme catalyses a lipid A disaccharide + ATP = a lipid IVA + ADP + H(+). The protein operates within glycolipid biosynthesis; lipid IV(A) biosynthesis; lipid IV(A) from (3R)-3-hydroxytetradecanoyl-[acyl-carrier-protein] and UDP-N-acetyl-alpha-D-glucosamine: step 6/6. Its function is as follows. Transfers the gamma-phosphate of ATP to the 4'-position of a tetraacyldisaccharide 1-phosphate intermediate (termed DS-1-P) to form tetraacyldisaccharide 1,4'-bis-phosphate (lipid IVA). This Legionella pneumophila (strain Lens) protein is Tetraacyldisaccharide 4'-kinase.